Consider the following 37-residue polypeptide: Large ribosomal subunit protein bL36 (37 aa).

It belongs to the bacterial ribosomal protein bL36 family.

The chain is Large ribosomal subunit protein bL36 from Geobacillus kaustophilus (strain HTA426).